The chain runs to 111 residues: T cell receptor beta variable 30 (111 aa).

An N-terminal signal peptide occupies residues 1–18 (MLCSLLALLLGTFFGVRS). An Ig-like domain is found at 19–111 (QTIHQWPATL…DSGFYLCAWS (93 aa)). The cysteines at positions 40 and 108 are disulfide-linked. Asparagine 80 carries N-linked (GlcNAc...) asparagine glycosylation.

In terms of assembly, alpha-beta TR is a heterodimer composed of an alpha and beta chain; disulfide-linked. The alpha-beta TR is associated with the transmembrane signaling CD3 coreceptor proteins to form the TR-CD3 (TcR or TCR). The assembly of alpha-beta TR heterodimers with CD3 occurs in the endoplasmic reticulum where a single alpha-beta TR heterodimer associates with one CD3D-CD3E heterodimer, one CD3G-CD3E heterodimer and one CD247 homodimer forming a stable octameric structure. CD3D-CD3E and CD3G-CD3E heterodimers preferentially associate with TR alpha and TR beta chains, respectively. The association of the CD247 homodimer is the last step of TcR assembly in the endoplasmic reticulum and is required for transport to the cell surface.

Its subcellular location is the cell membrane. Functionally, v region of the variable domain of T cell receptor (TR) beta chain that participates in the antigen recognition. Alpha-beta T cell receptors are antigen specific receptors which are essential to the immune response and are present on the cell surface of T lymphocytes. Recognize peptide-major histocompatibility (MH) (pMH) complexes that are displayed by antigen presenting cells (APC), a prerequisite for efficient T cell adaptive immunity against pathogens. Binding of alpha-beta TR to pMH complex initiates TR-CD3 clustering on the cell surface and intracellular activation of LCK that phosphorylates the ITAM motifs of CD3G, CD3D, CD3E and CD247 enabling the recruitment of ZAP70. In turn ZAP70 phosphorylates LAT, which recruits numerous signaling molecules to form the LAT signalosome. The LAT signalosome propagates signal branching to three major signaling pathways, the calcium, the mitogen-activated protein kinase (MAPK) kinase and the nuclear factor NF-kappa-B (NF-kB) pathways, leading to the mobilization of transcription factors that are critical for gene expression and essential for T cell growth and differentiation. The T cell repertoire is generated in the thymus, by V-(D)-J rearrangement. This repertoire is then shaped by intrathymic selection events to generate a peripheral T cell pool of self-MH restricted, non-autoaggressive T cells. Post-thymic interaction of alpha-beta TR with the pMH complexes shapes TR structural and functional avidity. This chain is T cell receptor beta variable 30, found in Homo sapiens (Human).